Consider the following 311-residue polypeptide: Protease HtpX homolog 1 (311 aa).

The next 2 membrane-spanning stretches (helical) occupy residues 12–32 (IIAL…IINF) and 35–55 (FPVI…WLIS). Zn(2+) is bound at residue His-137. The active site involves Glu-138. His-141 is a binding site for Zn(2+). 2 consecutive transmembrane segments (helical) span residues 159–179 (ILGF…IFAV) and 184–204 (ILVG…TFFL). Glu-216 lines the Zn(2+) pocket.

It belongs to the peptidase M48B family. Requires Zn(2+) as cofactor.

It localises to the cell membrane. This chain is Protease HtpX homolog 1, found in Sulfurisphaera tokodaii (strain DSM 16993 / JCM 10545 / NBRC 100140 / 7) (Sulfolobus tokodaii).